The following is a 311-amino-acid chain: tRNA dimethylallyltransferase (311 aa).

ATP is bound at residue 11–18 (GPTASGKS). 13–18 (TASGKS) serves as a coordination point for substrate. 2 interaction with substrate tRNA regions span residues 36-39 (DSMQ) and 160-164 (QRLIR).

The protein belongs to the IPP transferase family. Monomer. Mg(2+) is required as a cofactor.

The catalysed reaction is adenosine(37) in tRNA + dimethylallyl diphosphate = N(6)-dimethylallyladenosine(37) in tRNA + diphosphate. Catalyzes the transfer of a dimethylallyl group onto the adenine at position 37 in tRNAs that read codons beginning with uridine, leading to the formation of N6-(dimethylallyl)adenosine (i(6)A). This is tRNA dimethylallyltransferase from Rickettsia prowazekii (strain Madrid E).